The sequence spans 206 residues: FMN-dependent NADH:quinone oxidoreductase (206 aa).

Residues serine 10, serine 16–serine 18, methionine 93–phenylalanine 96, and threonine 137–glycine 140 each bind FMN.

The protein belongs to the azoreductase type 1 family. As to quaternary structure, homodimer. The cofactor is FMN.

It catalyses the reaction 2 a quinone + NADH + H(+) = 2 a 1,4-benzosemiquinone + NAD(+). The enzyme catalyses N,N-dimethyl-1,4-phenylenediamine + anthranilate + 2 NAD(+) = 2-(4-dimethylaminophenyl)diazenylbenzoate + 2 NADH + 2 H(+). In terms of biological role, quinone reductase that provides resistance to thiol-specific stress caused by electrophilic quinones. Functionally, also exhibits azoreductase activity. Catalyzes the reductive cleavage of the azo bond in aromatic azo compounds to the corresponding amines. In Psychromonas ingrahamii (strain DSM 17664 / CCUG 51855 / 37), this protein is FMN-dependent NADH:quinone oxidoreductase.